A 98-amino-acid chain; its full sequence is NADH-ubiquinone oxidoreductase chain 4L (98 aa).

3 helical membrane-spanning segments follow: residues 2-22 (SPIY…TLLF), 26-46 (LMST…MVTS), and 61-81 (ITML…LVMI).

It belongs to the complex I subunit 4L family. Core subunit of respiratory chain NADH dehydrogenase (Complex I) which is composed of 45 different subunits.

The protein resides in the mitochondrion inner membrane. The catalysed reaction is a ubiquinone + NADH + 5 H(+)(in) = a ubiquinol + NAD(+) + 4 H(+)(out). Its function is as follows. Core subunit of the mitochondrial membrane respiratory chain NADH dehydrogenase (Complex I) which catalyzes electron transfer from NADH through the respiratory chain, using ubiquinone as an electron acceptor. Part of the enzyme membrane arm which is embedded in the lipid bilayer and involved in proton translocation. This is NADH-ubiquinone oxidoreductase chain 4L (MT-ND4L) from Nephelomys albigularis (Tomes's rice rat).